Consider the following 312-residue polypeptide: Ubiquinone biosynthesis protein COQ9, mitochondrial (312 aa).

The transit peptide at Met1–Arg45 directs the protein to the mitochondrion. The SIFI-degron motif lies at Arg17–Pro32. Residues Gly43–Gln92 form a disordered region. Low complexity predominate over residues Gln52–Glu63. Ser80 is subject to Phosphoserine. Over residues Ser80 to Glu91 the composition is skewed to acidic residues. Lys169 bears the N6-acetyllysine mark. Residue Arg238 coordinates a 1,2-diacylglycero-3-phosphoethanolamine.

It belongs to the COQ9 family. As to quaternary structure, homodimer. Heterodimer; two heterodimers of COQ7:COQ9 come together on the same side of the lipid pseudo-bilayer and form a curved tetramer with a hydrophobic surface suitable for membrane interaction. These two tetramers assemble into a soluble octamer with a pseudo-bilayer of lipids captured within. Interacts with COQ7; this interaction allows ubiquinone (CoQ) isoprene intermediates presentation to COQ7 and facilitates the COQ7-mediated hydroxylase step. Post-translationally, in response to mitochondrial stress, the precursor protein is ubiquitinated by the SIFI complex in the cytoplasm before mitochondrial import, leading to its degradation. Within the SIFI complex, UBR4 initiates ubiquitin chain that are further elongated or branched by KCMF1.

It localises to the mitochondrion. It participates in cofactor biosynthesis; ubiquinone biosynthesis. Its function is as follows. Membrane-associated protein that warps the membrane surface to access and bind aromatic isoprenes with high specificity, including ubiquinone (CoQ) isoprene intermediates and presents them directly to COQ7, therefore facilitating the COQ7-mediated hydroxylase step. Participates in the biosynthesis of coenzyme Q, also named ubiquinone, an essential lipid-soluble electron transporter for aerobic cellular respiration. The polypeptide is Ubiquinone biosynthesis protein COQ9, mitochondrial (Rattus norvegicus (Rat)).